The chain runs to 29 residues: Cyclotide mela-1 (29 aa).

Residues 1–29 constitute a cross-link (cyclopeptide (Gly-Asp)); the sequence is GKYTCGETCFKGKCYTPGCTCSYPICKKD. 3 disulfides stabilise this stretch: Cys-5-Cys-19, Cys-9-Cys-21, and Cys-14-Cys-26.

Post-translationally, this is a cyclic peptide. Contains 3 disulfide bonds.

Functionally, probably participates in a plant defense mechanism (Potential). Binds to and induces leakage in phospholipd membranes, particularly ones containing 1-palmitoyl-2-oleophosphatidylethanolamine (POPE). In vitro, displays cytotoxicity against cultured cells but no hemolytic activity towards fresh erythrocytes. Not active against Gram-negative bacterium E.coli ATCC 25922 or Gram-positive bacterium S.aureus ATCC 25923 up to a concentration of 64 uM. The sequence is that of Cyclotide mela-1 from Melicytus latifolius (Norfolk Island mahoe).